The chain runs to 380 residues: Cytochrome b (380 aa).

4 consecutive transmembrane segments (helical) span residues 34-54 (FGSL…LLAA), 78-99 (WLIR…YLHI), 114-134 (WNTG…GYVL), and 179-199 (FFTL…IHLT). Heme b-binding residues include histidine 84 and histidine 98. 2 residues coordinate heme b: histidine 183 and histidine 197. A ubiquinone is bound at residue histidine 202. Transmembrane regions (helical) follow at residues 227–247 (TKDI…ALFS), 289–309 (LGGV…PLLH), 321–341 (LSQL…WIGS), and 348–368 (FIII…ILFP).

It belongs to the cytochrome b family. As to quaternary structure, the cytochrome bc1 complex contains 11 subunits: 3 respiratory subunits (MT-CYB, CYC1 and UQCRFS1), 2 core proteins (UQCRC1 and UQCRC2) and 6 low-molecular weight proteins (UQCRH/QCR6, UQCRB/QCR7, UQCRQ/QCR8, UQCR10/QCR9, UQCR11/QCR10 and a cleavage product of UQCRFS1). This cytochrome bc1 complex then forms a dimer. Requires heme b as cofactor.

It is found in the mitochondrion inner membrane. Component of the ubiquinol-cytochrome c reductase complex (complex III or cytochrome b-c1 complex) that is part of the mitochondrial respiratory chain. The b-c1 complex mediates electron transfer from ubiquinol to cytochrome c. Contributes to the generation of a proton gradient across the mitochondrial membrane that is then used for ATP synthesis. The polypeptide is Cytochrome b (MT-CYB) (Eudyptes chrysocome (Western rockhopper penguin)).